Reading from the N-terminus, the 846-residue chain is MAP7 domain-containing protein 1 (846 aa).

Disordered regions lie at residues 1–153 (MESG…ERAK) and 186–210 (EQRLKAEQRRAALEERQRQKLEKNK). Pro residues predominate over residues 24–41 (EPRPSPEGDPSPPPPPTP). Thr-49 and Thr-53 each carry phosphothreonine. Phosphoserine is present on Ser-95. Thr-99 carries the post-translational modification Phosphothreonine. Positions 113-123 (RSSQPSPTTVP) are enriched in low complexity. Residues Ser-115 and Ser-118 each carry the phosphoserine modification. At Thr-120 the chain carries Phosphothreonine. Residues Ser-125 and Ser-127 each carry the phosphoserine modification. Residues 130–224 (AKQDVKKAGE…AAIQRSVKKT (95 aa)) adopt a coiled-coil conformation. Residues 132–153 (QDVKKAGERHKLAKERREERAK) are compositionally biased toward basic and acidic residues. Residues Ser-256, Ser-275, Ser-315, Ser-368, and Ser-401 each carry the phosphoserine modification. The tract at residues 318-816 (TLPRNGRDQG…KGTAGDKSLG (499 aa)) is disordered. The span at 407-437 (RRLEATPVQKKEKKDKERENEKEKSALARER) shows a compositional bias: basic and acidic residues. A coiled-coil region spans residues 414–443 (VQKKEKKDKERENEKEKSALARERNLKKRQ). Ser-444, Ser-448, Ser-454, and Ser-460 each carry phosphoserine. Positions 460-471 (SPKSKARPSSPS) are enriched in low complexity. Lys-462 participates in a covalent cross-link: Glycyl lysine isopeptide (Lys-Gly) (interchain with G-Cter in SUMO2). A phosphoserine mark is found at Ser-479 and Ser-496. Residues 479–497 (SPCPSPGPGHALPPKPPSP) are compositionally biased toward pro residues. Residues 523–539 (PEDKNHRKSRAAEEKEP) are compositionally biased toward basic and acidic residues. A compositionally biased stretch (pro residues) spans 542–556 (PASPAPSPVPSPTPA). Residues Ser-544, Ser-548, and Ser-552 each carry the phosphoserine modification. Thr-554 carries the phosphothreonine modification. Over residues 568–579 (PAETAVPAVPAA) the composition is skewed to low complexity. Positions 599-740 (TTDREEATRL…AETKKQDAKE (142 aa)) form a coiled coil. Basic and acidic residues predominate over residues 600-740 (TDREEATRLL…AETKKQDAKE (141 aa)). At Thr-818 the chain carries Phosphothreonine.

It belongs to the MAP7 family.

It localises to the cytoplasm. The protein resides in the cytoskeleton. It is found in the spindle. Its subcellular location is the microtubule organizing center. The protein localises to the centrosome. It localises to the midbody. Its function is as follows. Microtubule-stabilizing protein involved in the control of cell motility and neurite outgrowth. Facilitate microtubule stabilization through the maintenance of acetylated stable microtubules. This chain is MAP7 domain-containing protein 1 (Map7d1), found in Mus musculus (Mouse).